The primary structure comprises 405 residues: Exodeoxyribonuclease 7 large subunit (405 aa).

This sequence belongs to the XseA family. Heterooligomer composed of large and small subunits.

Its subcellular location is the cytoplasm. The catalysed reaction is Exonucleolytic cleavage in either 5'- to 3'- or 3'- to 5'-direction to yield nucleoside 5'-phosphates.. Its function is as follows. Bidirectionally degrades single-stranded DNA into large acid-insoluble oligonucleotides, which are then degraded further into small acid-soluble oligonucleotides. In Syntrophomonas wolfei subsp. wolfei (strain DSM 2245B / Goettingen), this protein is Exodeoxyribonuclease 7 large subunit.